The primary structure comprises 134 residues: Holo-[acyl-carrier-protein] synthase (134 aa).

Mg(2+) is bound by residues Asp8 and Glu57.

The protein belongs to the P-Pant transferase superfamily. AcpS family. Mg(2+) serves as cofactor.

It is found in the cytoplasm. It carries out the reaction apo-[ACP] + CoA = holo-[ACP] + adenosine 3',5'-bisphosphate + H(+). Transfers the 4'-phosphopantetheine moiety from coenzyme A to a Ser of acyl-carrier-protein. The sequence is that of Holo-[acyl-carrier-protein] synthase from Rhizobium leguminosarum bv. trifolii (strain WSM2304).